Here is a 255-residue protein sequence, read N- to C-terminus: MTLCTRIIPCLDVADGRVVKGVNFTDLMDAGDPVEQAKVYDAAGADELCFLDISASHEGRGTMLDVVARTAEVCFMPLTVGGGVRQVEDARALLLAGADKVAVNSAAVARPELVAEIADRFGAQCVVAAIDARRNGDHWEVYTHGGRRPTGINALDHALNLTRLGAGEILLTSMDKDGTRDGYDLELTRLVADSVPVPVIASGGVGNLDHMVEGVTKGHASALLAASIFHFGQYSLAEAHEALAKAGLTVRHPPE.

Catalysis depends on residues Asp12 and Asp131.

This sequence belongs to the HisA/HisF family. Heterodimer of HisH and HisF.

It localises to the cytoplasm. It carries out the reaction 5-[(5-phospho-1-deoxy-D-ribulos-1-ylimino)methylamino]-1-(5-phospho-beta-D-ribosyl)imidazole-4-carboxamide + L-glutamine = D-erythro-1-(imidazol-4-yl)glycerol 3-phosphate + 5-amino-1-(5-phospho-beta-D-ribosyl)imidazole-4-carboxamide + L-glutamate + H(+). Its pathway is amino-acid biosynthesis; L-histidine biosynthesis; L-histidine from 5-phospho-alpha-D-ribose 1-diphosphate: step 5/9. Its function is as follows. IGPS catalyzes the conversion of PRFAR and glutamine to IGP, AICAR and glutamate. The HisF subunit catalyzes the cyclization activity that produces IGP and AICAR from PRFAR using the ammonia provided by the HisH subunit. This chain is Imidazole glycerol phosphate synthase subunit HisF, found in Zymomonas mobilis subsp. mobilis (strain ATCC 31821 / ZM4 / CP4).